Reading from the N-terminus, the 601-residue chain is MAASGDVGKLLQVQNGTPASTSYNGVDALHACNILQQLKALYDEAQLTDIVVEVDHGKTFSCHRNVLAAISPYFRSMFTSGLTESSQREVRIVGVESESMHLVLDYAYTSRVTLTESNVQALFTAASIFQIPALQDQCAQFMISRLDPQNCIGVFMFADAYGHQELRERSQDYIRKKFLCVMGEQEFLHLTKDQLVSILNSDDLNVEKEEHVYESIVHWLEYDCSRREADLPEVFAKCIRLPLLEEAFLSRIPPAFALALSRDSSDKSRLNGTNGCSQRLGMTASEMIICFDAAHKHSGKKQTVPCLDIAAGKVYKLCKPPNDLREVGILISSENDIFIAGGYRPSNSEVCIDHRAESDFWQYEHAGNRWLPRSPMLRARIGCRLVHCCGKLYALGGRVYEGDGRNALKSVECYDARDNCWTAVSPMPVAMEFHSTIEYKDRIYVLQGEYFFCFDPRKDYWGHLPSMNIPRTQGLAALHKNCIYYIAGICRNHQRTFTVEVYDIEQNTWCRKRDLPFDQATSPYIKVLLLQGRLHLFVRATQVMVEEHVFRTSRKNSLYQYDDEADHWTKVYETPDRLWDLGRHFECVVAKLYPQCLQKVL.

In terms of domain architecture, BTB spans 48-116 (TDIVVEVDHG…AYTSRVTLTE (69 aa)). In terms of domain architecture, BACK spans 151 to 253 (CIGVFMFADA…LEEAFLSRIP (103 aa)). Kelch repeat units lie at residues 336-390 (DIFI…HCCG), 391-441 (KLYA…EYKD), 443-481 (IYVL…LHKN), 482-529 (CIYY…KVLL), and 542-588 (QVMV…FECV).

It belongs to the KBTBD8 family. In terms of assembly, component of the BCR(KBTBD8) E3 ubiquitin ligase complex.

The protein resides in the cytoplasm. Its subcellular location is the cytoskeleton. It localises to the spindle. The protein localises to the golgi apparatus. Functionally, substrate-specific adapter of a BCR (BTB-CUL3-RBX1) E3 ubiquitin ligase complex that acts as a regulator of neural crest specification. The BCR(KBTBD8) complex acts by mediating monoubiquitination of target proteins. This Danio rerio (Zebrafish) protein is Kelch repeat and BTB domain-containing protein 8 (kbtbd8).